A 325-amino-acid polypeptide reads, in one-letter code: UDP-N-acetylglucosamine transporter ROCK1 (325 aa).

The Cytoplasmic portion of the chain corresponds to 1–13 (MATANGAKSPSSM). A helical transmembrane segment spans residues 14 to 34 (GPKVLFYSILLTLQYGAQPLI). Over 35–42 (SKRCIRKD) the chain is Lumenal. The helical transmembrane segment at 43-63 (VIVTSSVLTCEIVKVICALIL) threads the bilayer. The Cytoplasmic segment spans residues 64 to 109 (MARNGSLKGLAKEWTLMGSLTASGLPAAIYALQNSLLQISYRSLDS). A helical membrane pass occupies residues 110–130 (LTFSILNQTKIFFTAFFTFII). Over 131–135 (LRQKQ) the chain is Lumenal. The helical transmembrane segment at 136–156 (SILQIGALCLLIMAAVLLSVG) threads the bilayer. Residues 157-171 (EGSNKDSSGINADQK) are Cytoplasmic-facing. The helical transmembrane segment at 172–192 (LFYGIIPVLAASVLSGLASSL) threads the bilayer. At 193 to 203 (CQWASQVKKHS) the chain is on the lumenal side. The helical transmembrane segment at 204-224 (SYLMTVEMSIVGSLCLLVSTL) threads the bilayer. The Cytoplasmic portion of the chain corresponds to 225–241 (KSPDGEAIKKYGFFHGW). The helical transmembrane segment at 242 to 262 (TALTLVPVISNALGGILVGLV) threads the bilayer. Topologically, residues 263–270 (TSHAGGVR) are lumenal. Residues 271–291 (KGFVIVSALLVTALLQFAFEG) form a helical membrane-spanning segment. Residues 292-325 (KPPSSYCLVALPLVMSSISMYQKYPYIDKKKKKV) lie on the Cytoplasmic side of the membrane.

It belongs to the nucleotide-sugar transporter family. CMP-Sialate:CMP antiporter (TC 2.A.7.12) subfamily. As to expression, expressed in roots, cotyledons, leaves, stems, flowers and siliques.

It is found in the endoplasmic reticulum membrane. Mediates the transport of UDP-linked acetylated hexosamines across the endoplasmic reticulum (ER) membrane. Facilitates UDP-N-acetylglucosamine (UDP-GlcNAc) and UDP-N-acetylgalactosamine (UDP-GalNAc) transport. Regulates the cytokinin signal in meristematic cells through modulating activity of cytokinin oxidases/dehydrogenases. Part of the ER quality control system, which determines the fate of aberrant proteins in the secretory pathway. This chain is UDP-N-acetylglucosamine transporter ROCK1, found in Arabidopsis thaliana (Mouse-ear cress).